Consider the following 561-residue polypeptide: Alpha-1D adrenergic receptor (561 aa).

Over methionine 1 to glycine 90 the chain is Extracellular. Residues threonine 10–alanine 71 are disordered. Positions glycine 21 to serine 56 are enriched in gly residues. N-linked (GlcNAc...) asparagine glycosylation is found at asparagine 60 and asparagine 76. A helical membrane pass occupies residues valine 91–valine 115. The Cytoplasmic segment spans residues alanine 116–tyrosine 127. The chain crosses the membrane as a helical span at residues phenylalanine 128–leucine 153. Topologically, residues glycine 154–cysteine 163 are extracellular. The helical transmembrane segment at aspartate 164 to valine 186 threads the bilayer. Residues aspartate 187 to alanine 207 are Cytoplasmic-facing. Residues alanine 208 to proline 232 traverse the membrane as a helical segment. Residues valine 233–glutamate 245 lie on the Extracellular side of the membrane. Residues valine 246 to cysteine 269 form a helical membrane-spanning segment. Residues arginine 270–lysine 342 are Cytoplasmic-facing. Residues threonine 343–leucine 367 form a helical membrane-spanning segment. Residues phenylalanine 368 to serine 374 lie on the Extracellular side of the membrane. Residues glutamate 375–serine 399 form a helical membrane-spanning segment. Over serine 400–isoleucine 561 the chain is Cytoplasmic. Cysteine 413 is lipidated: S-palmitoyl cysteine. The interval alanine 452–alanine 481 is disordered. Positions threonine 467–lysine 479 are enriched in polar residues.

The protein belongs to the G-protein coupled receptor 1 family. Adrenergic receptor subfamily. ADRA1D sub-subfamily. As to quaternary structure, interacts with FLNA (via filamin repeat 21); increases PKA-mediated phosphorylation of FLNA. In terms of processing, palmitoylated. Palmitoylation by ZDHHC21 may increase the expression of the receptor and regulate downstream signaling. Vas deferens, hippocampus, cerebral cortex, aorta, brain stem, heart and spleen.

It localises to the cell membrane. This alpha-adrenergic receptor mediates its effect through the influx of extracellular calcium. The sequence is that of Alpha-1D adrenergic receptor (Adra1d) from Rattus norvegicus (Rat).